A 93-amino-acid chain; its full sequence is Phosphoribosyl-ATP pyrophosphatase (93 aa).

This sequence belongs to the PRA-PH family.

The protein localises to the cytoplasm. It carries out the reaction 1-(5-phospho-beta-D-ribosyl)-ATP + H2O = 1-(5-phospho-beta-D-ribosyl)-5'-AMP + diphosphate + H(+). The protein operates within amino-acid biosynthesis; L-histidine biosynthesis; L-histidine from 5-phospho-alpha-D-ribose 1-diphosphate: step 2/9. The protein is Phosphoribosyl-ATP pyrophosphatase of Mycobacterium avium (strain 104).